We begin with the raw amino-acid sequence, 764 residues long: Semaphorin-3D (764 aa).

A signal peptide spans 1–41 (MKTAGEPDRRRQRRQVRTGRFSCAWWSTSVMLFFSLPEGNC). A Sema domain is found at 48-535 (RVKLGYKDLI…GSDGLVQVSL (488 aa)). A disulfide bridge connects residues cysteine 121 and cysteine 132. The N-linked (GlcNAc...) asparagine glycan is linked to asparagine 143. Intrachain disulfides connect cysteine 150–cysteine 159, cysteine 290–cysteine 402, and cysteine 314–cysteine 362. Residue asparagine 490 is glycosylated (N-linked (GlcNAc...) asparagine). Cysteines 538 and 556 form a disulfide. The N-linked (GlcNAc...) asparagine glycan is linked to asparagine 610. Positions 661–740 (GDAGSYFCTS…EYCETMWHRE (80 aa)) constitute an Ig-like C2-type domain. An intrachain disulfide couples cysteine 668 to cysteine 733. The interval 743–764 (QKQKGKWKHVQELRKSRNRRHH) is disordered.

It belongs to the semaphorin family.

The protein resides in the secreted. In terms of biological role, may play a role in the guidance of several axon pathways. This is Semaphorin-3D (sema3d) from Danio rerio (Zebrafish).